Consider the following 212-residue polypeptide: uncharacterized protein (212 aa).

3 residues coordinate S-adenosyl-L-methionine: glycine 53, glutamate 74, and aspartate 96.

This sequence belongs to the methyltransferase superfamily. YrrT family.

In terms of biological role, could be a S-adenosyl-L-methionine-dependent methyltransferase. This is an uncharacterized protein from Anoxybacillus flavithermus (strain DSM 21510 / WK1).